The sequence spans 941 residues: MVERRNPLVLSSTRSTLRSVLNSSQPSSADGDRVLNKDGDLLRGNARLSAGILRWRKDGENVSDAKLDSLDDSALVGLSTQLLKRLSINSGSLVVVKNIEIGIQRVAQVVVLDPPKTTLEDASLTQVPVSDSLHTMLVFPTYDLMGQQLLDQEVAYLSPMLAFNLSLHISCLKSLVHRGNGVLEKYFEAKCDEEFIGKSAEDGSKIGLDLEPVSQVPGYASHLRVSFVKIPECGTIPSLKVNSSFEAEERQGLIDSALQKYFGTDRQLSRGDIFRIYIDWNCGSSICNPCSQRLCSESDDYIYFKVIAMEPSNERFLRVNHSQTALVLGGTVSSGLPPDLLVYRSKVPMPLQEETVNILASVLSPPLCPSALASKLRVAVLLHGIPGCGKRTVVKYVARRLGLHVVEFSCHSLLASSERKTSTALAQTFNMARRYSPTILLLRHFDVFKNLGSQDGSLGDRVGVSFEIASVIRELTEPVSNGDSSMEEKSNSNFSENEVGKFRGHQVLLIASAESTEGISPTIRRCFSHEIRMGSLNDEQRSEMLSQSLQGVSQFLNISSDEFMKGLVGQTSGFLPRDLQALVADAGANLYISQESETKKINSLSDDLHGVDIHQASQIDNSTEKLTAKEDFTKALDRSKKRNASALGAPKVPNVKWDDVGGLEDVKTSILDTVQLPLLHKDLFSSGLRKRSGVLLYGPPGTGKTLLAKAVATECSLNFLSVKGPELINMYIGESEKNVRDIFEKARSARPCVIFFDELDSLAPARGASGDSGGVMDRVVSQMLAEIDGLSDSSQDLFIIGASNRPDLIDPALLRPGRFDKLLYVGVNADASYRERVLKALTRKFKLSEDVSLYSVAKKCPSTFTGADMYALCADAWFQAAKRKVSKSDSGDMPTEEDDPDSVVVEYVDFIKAMDQLSPSLSITELKKYEMLRDQFQGRSS.

ATP contacts are provided by residues 384 to 391 and 698 to 705; these read GIPGCGKR and GPPGTGKT.

This sequence belongs to the AAA ATPase family. In terms of assembly, interacts with PEX1; forming the PEX1-PEX6 AAA ATPase complex, which is composed of a heterohexamer formed by a trimer of PEX1-PEX6 dimers. Interacts with APME9.

The protein localises to the cytoplasm. It is found in the cytosol. Its subcellular location is the peroxisome membrane. It carries out the reaction ATP + H2O = ADP + phosphate + H(+). Its function is as follows. Component of the PEX1-PEX6 AAA ATPase complex, a protein dislocase complex that mediates the ATP-dependent extraction of the PEX5 receptor from peroxisomal membranes, an essential step for PEX5 recycling. Specifically recognizes PEX5 monoubiquitinated at 'Cys-11', and pulls it out of the peroxisome lumen through the PEX2-PEX10-PEX12 retrotranslocation channel. Extraction by the PEX1-PEX6 AAA ATPase complex is accompanied by unfolding of the TPR repeats and release of bound cargo from PEX5. Required for jasmonate biosynthesis. Necessary for the developmental elimination of obsolete peroxisome matix proteins. The sequence is that of Peroxisomal ATPase PEX6 from Arabidopsis thaliana (Mouse-ear cress).